We begin with the raw amino-acid sequence, 280 residues long: Foldase protein PrsA 4 (280 aa).

Positions 1–21 are cleaved as a signal peptide; sequence MKRKKLVIGSILMGMTLSLSA. Cys22 carries the N-palmitoyl cysteine lipid modification. Residue Cys22 is the site of S-diacylglycerol cysteine attachment. In terms of domain architecture, PpiC spans 132–222; sequence KPKLQVSHIL…FGYHIIKLTD (91 aa).

The protein belongs to the PrsA family.

Its subcellular location is the cell membrane. It catalyses the reaction [protein]-peptidylproline (omega=180) = [protein]-peptidylproline (omega=0). In terms of biological role, plays a major role in protein secretion by helping the post-translocational extracellular folding of several secreted proteins. In Bacillus cereus (strain ATCC 14579 / DSM 31 / CCUG 7414 / JCM 2152 / NBRC 15305 / NCIMB 9373 / NCTC 2599 / NRRL B-3711), this protein is Foldase protein PrsA 4 (prsA4).